Consider the following 233-residue polypeptide: Orotidine 5'-phosphate decarboxylase (233 aa).

Substrate-binding positions include Asp11, Lys33, 60-69 (DLKFHDIPNT), Thr120, Arg181, Gln190, Gly210, and Arg211. Lys62 acts as the Proton donor in catalysis.

This sequence belongs to the OMP decarboxylase family. Type 1 subfamily. Homodimer.

It carries out the reaction orotidine 5'-phosphate + H(+) = UMP + CO2. It participates in pyrimidine metabolism; UMP biosynthesis via de novo pathway; UMP from orotate: step 2/2. Functionally, catalyzes the decarboxylation of orotidine 5'-monophosphate (OMP) to uridine 5'-monophosphate (UMP). The protein is Orotidine 5'-phosphate decarboxylase of Vibrio parahaemolyticus serotype O3:K6 (strain RIMD 2210633).